The chain runs to 109 residues: Thiosulfate sulfurtransferase GlpE (109 aa).

A Rhodanese domain is found at 17–105; sequence KEGKTALVDI…WARSYPQDIT (89 aa). The active-site Cysteine persulfide intermediate is cysteine 65.

It belongs to the GlpE family.

The protein localises to the cytoplasm. It catalyses the reaction thiosulfate + hydrogen cyanide = thiocyanate + sulfite + 2 H(+). It carries out the reaction thiosulfate + [thioredoxin]-dithiol = [thioredoxin]-disulfide + hydrogen sulfide + sulfite + 2 H(+). Functionally, transferase that catalyzes the transfer of sulfur from thiosulfate to thiophilic acceptors such as cyanide or dithiols. May function in a CysM-independent thiosulfate assimilation pathway by catalyzing the conversion of thiosulfate to sulfite, which can then be used for L-cysteine biosynthesis. The polypeptide is Thiosulfate sulfurtransferase GlpE (Yersinia pestis bv. Antiqua (strain Antiqua)).